The following is a 253-amino-acid chain: 5'/3'-nucleotidase SurE (253 aa).

Positions 8, 9, 39, and 92 each coordinate a divalent metal cation.

The protein belongs to the SurE nucleotidase family. It depends on a divalent metal cation as a cofactor.

It is found in the cytoplasm. The enzyme catalyses a ribonucleoside 5'-phosphate + H2O = a ribonucleoside + phosphate. The catalysed reaction is a ribonucleoside 3'-phosphate + H2O = a ribonucleoside + phosphate. It carries out the reaction [phosphate](n) + H2O = [phosphate](n-1) + phosphate + H(+). In terms of biological role, nucleotidase with a broad substrate specificity as it can dephosphorylate various ribo- and deoxyribonucleoside 5'-monophosphates and ribonucleoside 3'-monophosphates with highest affinity to 3'-AMP. Also hydrolyzes polyphosphate (exopolyphosphatase activity) with the preference for short-chain-length substrates (P20-25). Might be involved in the regulation of dNTP and NTP pools, and in the turnover of 3'-mononucleotides produced by numerous intracellular RNases (T1, T2, and F) during the degradation of various RNAs. The sequence is that of 5'/3'-nucleotidase SurE from Salmonella paratyphi A (strain AKU_12601).